The sequence spans 238 residues: LexA repressor (238 aa).

The H-T-H motif DNA-binding region spans 26–46; sequence FDEMKDALDLRSKSGIHRLIT. Catalysis depends on for autocatalytic cleavage activity residues S159 and K197.

The protein belongs to the peptidase S24 family. In terms of assembly, homodimer.

It catalyses the reaction Hydrolysis of Ala-|-Gly bond in repressor LexA.. Functionally, represses a number of genes involved in the response to DNA damage (SOS response), including recA and lexA. In the presence of single-stranded DNA, RecA interacts with LexA causing an autocatalytic cleavage which disrupts the DNA-binding part of LexA, leading to derepression of the SOS regulon and eventually DNA repair. The polypeptide is LexA repressor (Rhodobacter capsulatus (Rhodopseudomonas capsulata)).